The following is a 384-amino-acid chain: Putative pectate lyase 2 (384 aa).

The first 23 residues, 1–23 (MASLFLTIISLLFAAFSSSVVEA), serve as a signal peptide directing secretion. Residues Asp-182, Asp-206, and Asp-210 each coordinate Ca(2+). Arg-262 is an active-site residue.

Belongs to the polysaccharide lyase 1 family. Ca(2+) is required as a cofactor.

It carries out the reaction Eliminative cleavage of (1-&gt;4)-alpha-D-galacturonan to give oligosaccharides with 4-deoxy-alpha-D-galact-4-enuronosyl groups at their non-reducing ends.. It functions in the pathway glycan metabolism; pectin degradation; 2-dehydro-3-deoxy-D-gluconate from pectin: step 2/5. This chain is Putative pectate lyase 2, found in Arabidopsis thaliana (Mouse-ear cress).